The primary structure comprises 275 residues: Vitamin B12-binding protein (275 aa).

The signal sequence occupies residues 1 to 19 (MMNKLCFALPLIFSDASFA). Residues 25 to 272 (RIISLAPHST…EVCEHFETVR (248 aa)) form the Fe/B12 periplasmic-binding domain. A disulfide bridge links cysteine 185 with cysteine 265.

It belongs to the BtuF family. The complex is composed of two ATP-binding proteins (BtuD), two transmembrane proteins (BtuC) and a solute-binding protein (BtuF).

It is found in the periplasm. Its function is as follows. Part of the ABC transporter complex BtuCDF involved in vitamin B12 import. Binds vitamin B12 and delivers it to the periplasmic surface of BtuC. The polypeptide is Vitamin B12-binding protein (Vibrio campbellii (strain ATCC BAA-1116)).